Consider the following 288-residue polypeptide: Tryptophan 2,3-dioxygenase (288 aa).

Substrate-binding positions include 57-61, Tyr-119, and Arg-123; that span reads FIIQH. His-246 provides a ligand contact to heme. A substrate-binding site is contributed by Thr-260.

The protein belongs to the tryptophan 2,3-dioxygenase family. As to quaternary structure, homotetramer. Requires heme as cofactor.

It catalyses the reaction L-tryptophan + O2 = N-formyl-L-kynurenine. It functions in the pathway amino-acid degradation; L-tryptophan degradation via kynurenine pathway; L-kynurenine from L-tryptophan: step 1/2. Heme-dependent dioxygenase that catalyzes the oxidative cleavage of the L-tryptophan (L-Trp) pyrrole ring and converts L-tryptophan to N-formyl-L-kynurenine. Catalyzes the oxidative cleavage of the indole moiety. The chain is Tryptophan 2,3-dioxygenase from Pseudomonas aeruginosa (strain UCBPP-PA14).